Consider the following 426-residue polypeptide: Citrate transporter (426 aa).

12 consecutive transmembrane segments (helical) span residues 1–21 (MLAILGFVMMIVFMYLIMSNR), 22–42 (LSALIALIVVPIVFALISGFG), 59–79 (TGIMLLFAILYFGIMIDSGLF), 86–106 (ILSFVKGDPLKIAVGTAVLTM), 137–157 (LVLAGIAMLGSGVMNIIPWGG), 176–196 (PLIPAMIAGILWVIAVAYILG), 232–252 (LLTVALMAALITSLLPLPVLF), 278–298 (AGNALNVVSMVFAAGIFTGIL), 318–338 (AMGPHLPLITAIVSMPFTFFM), 343–363 (FYFGVLPIIAEAASAYGIDAA), 377–397 (LLSPLVPSTYLLVGMAGVSFG), and 406–426 (WAVGTTIVMTIAALLIGIISF).

Belongs to the CitM (TC 2.A.11) transporter family.

Its subcellular location is the cell membrane. Transports the free citrate anion. Probably cotransports citrate and at least three or four protons. The citrate uptake is inhibited by the presence of magnesium ions. The protein is Citrate transporter (citN) of Bacillus subtilis (strain 168).